Reading from the N-terminus, the 258-residue chain is Insulin-like growth factor-binding protein 4 (258 aa).

An N-terminal signal peptide occupies residues 1 to 21; that stretch reads MLSLCLMAALLLAAGPGPSLG. An IGFBP N-terminal domain is found at 23–103; it reads EAIHCPPCSE…VHGQGVCMEL (81 aa). Intrachain disulfides connect C27/C53, C30/C55, C38/C56, C44/C59, C67/C80, and C74/C100. N125 is a glycosylation site (N-linked (GlcNAc...) asparagine). Intrachain disulfides connect C131-C138, C174-C204, C215-C226, and C228-C249. Positions 171–249 constitute a Thyroglobulin type-1 domain; that stretch reads QGSCQSELHR…GLEPKGELDC (79 aa). Position 255 is a phosphoserine (S255).

Binds IGF2 more than IGF1.

It is found in the secreted. In terms of biological role, IGF-binding proteins prolong the half-life of the IGFs and have been shown to either inhibit or stimulate the growth promoting effects of the IGFs on cell culture. They alter the interaction of IGFs with their cell surface receptors. This chain is Insulin-like growth factor-binding protein 4 (IGFBP4), found in Bos taurus (Bovine).